Consider the following 235-residue polypeptide: MSKSSKAYRAAAVKVDRTNLYTPLQAAKLAKETSSTRQDATVEVAIRLGVDSRKADQMVRGTVNLPHGTGKTARVAVFAVGEKADVAVAAGADVVGSDDLIEKIQGGWLEFDAAVATPDQMAKVGRIARVLGPRGLMPNPKTGTVTPDVAKAVADIKGGKINFRVDKQANLHFVIGKASFDEKRLAENYGAALEEVLRLKPSSSKGRYLKKVTVSTTMGPGIPVDPSITRNFTEE.

Belongs to the universal ribosomal protein uL1 family. In terms of assembly, part of the 50S ribosomal subunit.

Binds directly to 23S rRNA. The L1 stalk is quite mobile in the ribosome, and is involved in E site tRNA release. Its function is as follows. Protein L1 is also a translational repressor protein, it controls the translation of the L11 operon by binding to its mRNA. This chain is Large ribosomal subunit protein uL1, found in Mycobacterium leprae (strain Br4923).